Here is a 110-residue protein sequence, read N- to C-terminus: Large ribosomal subunit protein uL22 (110 aa).

Belongs to the universal ribosomal protein uL22 family. As to quaternary structure, part of the 50S ribosomal subunit.

Functionally, this protein binds specifically to 23S rRNA; its binding is stimulated by other ribosomal proteins, e.g. L4, L17, and L20. It is important during the early stages of 50S assembly. It makes multiple contacts with different domains of the 23S rRNA in the assembled 50S subunit and ribosome. In terms of biological role, the globular domain of the protein is located near the polypeptide exit tunnel on the outside of the subunit, while an extended beta-hairpin is found that lines the wall of the exit tunnel in the center of the 70S ribosome. The sequence is that of Large ribosomal subunit protein uL22 from Shewanella loihica (strain ATCC BAA-1088 / PV-4).